The following is a 530-amino-acid chain: Cation channel sperm-associated protein 2 (530 aa).

Residues 1-108 (MAAYQQEEQM…LWAGWVLECP (108 aa)) are Cytoplasmic-facing. The chain crosses the membrane as a helical span at residues 109-131 (LFKNFIIFLVFLNTIILMVEIEL). Residues 132–140 (LESTNTKLW) are Extracellular-facing. The helical transmembrane segment at 141–166 (PLKLTLEVAAWFILLIFILEILLKWL) threads the bilayer. At 167-175 (SNFSVFWKS) the chain is on the cytoplasmic side. The chain crosses the membrane as a helical span at residues 176 to 200 (AWNVFDFVVTMLSLLPEVVVLVGVT). Residues 201–203 (GQS) are Extracellular-facing. The chain crosses the membrane as a helical span at residues 204–222 (VWLQLLRICRVLRSLKLLA). Over 223–239 (QFRQIQIIILVLVRALK) the chain is Cytoplasmic. A helical transmembrane segment spans residues 240-262 (SMTFLLMLLLIFFYIFAVTGVYV). Topologically, residues 263-281 (FSEYTRSPRQDLEYHVFFS) are extracellular. Positions 282–294 (DLPNSLVTVFILF) form an intramembrane region, helical; Pore-forming. The Extracellular portion of the chain corresponds to 295 to 314 (TLDHWYALLQDVWKVPEVSR). The helical transmembrane segment at 315 to 341 (IFSSIYFILWLLLGSIIFRSIIVAMMV) threads the bilayer. Topologically, residues 342-530 (TNFQNIRKEL…VQALMNLEDK (189 aa)) are cytoplasmic. The disordered stretch occupies residues 378–458 (MSHEALTSSH…TSSSYSSSSE (81 aa)). Residues 429–440 (KTEETLSKKREY) are compositionally biased toward basic and acidic residues. Residues 442–458 (SSSCVSSTSSSYSSSSE) show a composition bias toward low complexity.

The protein belongs to the cation channel sperm-associated (TC 1.A.1.19) family. Component of the CatSper complex or CatSpermasome composed of the core pore-forming members CATSPER1, CATSPER2, CATSPER3 and CATSPER4 as well as auxiliary members CATSPERB, CATSPERG, CATSPERD, CATSPERE, CATSPERZ, C2CD6/CATSPERT, TMEM249, TMEM262 and EFCAB9. HSPA1 may be an additional auxiliary complex member. The core complex members CATSPER1, CATSPER2, CATSPER3 and CATSPER4 form a heterotetrameric channel. The auxiliary CATSPERB, CATSPERG, CATSPERD and CATSPERE subunits form a pavilion-like structure over the pore which stabilizes the complex through interactions with CATSPER4, CATSPER3, CATSPER1 and CATSPER2 respectively. TMEM262/CATSPERH interacts with CATSPERB, further stabilizing the complex. C2CD6/CATSPERT interacts at least with CATSPERD and is required for targeting the CatSper complex in the flagellar membrane. Interacts with Ca(v)3.3/CACNA1I, leading to suppression of T-type calcium channel activity. Testis-specific.

The protein resides in the cell projection. It localises to the cilium. The protein localises to the flagellum membrane. The enzyme catalyses Ca(2+)(in) = Ca(2+)(out). The CatSper calcium channel is indirectly activated by extracellular progesterone and prostaglandins following the sequence: progesterone &gt; PGF1-alpha = PGE1 &gt; PGA1 &gt; PGE2 &gt;&gt; PGD2. The CatSper calcium channel is directly inhibited by endocannabinoid 2-arachidonoylglycerol (2AG). Indirect activation by progesterone takes place via the following mechanism: progesterone binds and activates the acylglycerol lipase ABHD2, which in turn mediates hydrolysis of 2AG inhibitor, relieving inhibition of the CatSper channel. The primary effect of progesterone activation is to shift voltage dependence towards more physiological, negative membrane potentials; it is not mediated by metabotropic receptors and second messengers. Sperm capacitation enhances the effect of progesterone by providing additional negative shift. Also activated by the elevation of intracellular pH. Its function is as follows. Pore-forming subunit of the CatSper complex, a sperm-specific voltage-gated calcium channel, that plays a central role in calcium-dependent physiological responses essential for successful fertilization, such as sperm hyperactivation, acrosome reaction and chemotaxis towards the oocyte. In Homo sapiens (Human), this protein is Cation channel sperm-associated protein 2 (CATSPER2).